Here is a 1485-residue protein sequence, read N- to C-terminus: Formin BNR1 (1485 aa).

3 disordered regions span residues His-65–His-88, His-226–Thr-248, and Ala-549–Glu-575. The 527-residue stretch at Asn-110–Gly-636 folds into the GBD/FH3 domain. The span at Thr-231–Thr-248 shows a compositional bias: polar residues. Acidic residues predominate over residues Leu-553–Asp-564. Residues Ala-660–Ala-734 are a coiled coil. Residues Gly-746–Pro-874 form a disordered region. An FH2 domain is found at Val-953 to Asp-1368. Coiled coils occupy residues His-1240 to Asn-1312 and Gln-1351 to Glu-1382. The disordered stretch occupies residues Leu-1447–Ser-1471.

It belongs to the formin homology family. BNI1 subfamily. In terms of assembly, interacts with IQG1.

It localises to the bud neck. It is found in the cell septum. Its function is as follows. May organize microtubules by mediating spindle positioning and movement in the budding process. Required for cytokinesis and the maintenance of polarized hyphal growth. The chain is Formin BNR1 (BNR1) from Candida albicans (strain SC5314 / ATCC MYA-2876) (Yeast).